The chain runs to 356 residues: uncharacterized protein (356 aa).

A run of 6 helical transmembrane segments spans residues 2-22 (FEAIIYNISVMVAGIYLFHRL), 35-55 (EYVTVLMTFVSLLLAAYPIPF), 76-96 (NMIYTLTAAFIVSLVDVFIFG), 99-119 (IIYGITLIVIAGIVSAVGPFL), 124-144 (IISLLILNLISIIILLFLALL), and 151-171 (VEILVLIPISFIITIASAITF). The GGDEF domain maps to 218-353 (QSLALLLIDI…GRNKVMFNPI (136 aa)).

Its subcellular location is the cell membrane. This is an uncharacterized protein from Staphylococcus epidermidis (strain ATCC 35984 / DSM 28319 / BCRC 17069 / CCUG 31568 / BM 3577 / RP62A).